Consider the following 253-residue polypeptide: Phosphoglycerate mutase 2 (253 aa).

T3 carries the phosphothreonine modification. Substrate is bound by residues 10–17 (RHGESTWN), 23–24 (CG), R62, 89–92 (ERHY), K100, and 116–117 (RR). The Tele-phosphohistidine intermediate role is filled by H11. S14 bears the Phosphoserine mark. E89 serves as the catalytic Proton donor/acceptor. A Phosphoserine modification is found at S118. 2 positions are modified to phosphotyrosine: Y132 and Y133. S135 bears the Phosphoserine mark. The residue at position 152 (T152) is a Phosphothreonine. Residue 187 to 188 (GN) participates in substrate binding.

This sequence belongs to the phosphoglycerate mutase family. BPG-dependent PGAM subfamily. As to quaternary structure, homodimer. Interacts with ENO1. As to expression, expressed in the heart and muscle. Not found in the liver and brain.

It carries out the reaction (2R)-2-phosphoglycerate = (2R)-3-phosphoglycerate. The enzyme catalyses (2R)-3-phospho-glyceroyl phosphate = (2R)-2,3-bisphosphoglycerate + H(+). Functionally, interconversion of 3- and 2-phosphoglycerate with 2,3-bisphosphoglycerate as the primer of the reaction. Can also catalyze the reaction of EC 5.4.2.4 (synthase), but with a reduced activity. The chain is Phosphoglycerate mutase 2 (PGAM2) from Homo sapiens (Human).